Consider the following 733-residue polypeptide: DNA repair and recombination protein RAD54-like (733 aa).

The interval 1-35 (LAKRKAGGEEEDGEWRPPATQKRQKAGSEAESADC) is disordered. Positions 159 to 334 (SRRIPGSHGC…FSLVHFVNSG (176 aa)) constitute a Helicase ATP-binding domain. Residue 172 to 179 (DEMGLGKT) coordinates ATP. Positions 285-288 (DEGH) match the DEGH box motif. In terms of domain architecture, Helicase C-terminal spans 488-642 (LVLDYILAVT…CVVDEEQDVE (155 aa)). K504 is modified (N6-acetyllysine). Residue S561 is modified to Phosphoserine; by NEK1.

The protein belongs to the SNF2/RAD54 helicase family. In terms of assembly, homohexamer. Interacts (via N-terminus) with RAD51. Interacts with NAP1L1. Interacts with BRD9; this interaction orchestrates RAD51-RAD54 complex formation. Acetylated. Acetylation promotes interaction with BRD9, and subsequently with RAD54, which is essential for homologous recombination (HR). In terms of processing, phosphorylated. Phosphorylation at Ser-561 by NEK1 specifically in G2 phase allows efficient removal of RAD51 filaments from DNA. As to expression, highly expressed in bursa, thymus, testis, and ovary. Low level of expression seen in all other organs tested.

The protein localises to the nucleus. Functionally, plays an essential role in homologous recombination (HR) which is a major pathway for repairing DNA double-strand breaks (DSBs), single-stranded DNA (ssDNA) gaps, and stalled or collapsed replication forks. Acts as a molecular motor during the homology search and guides RAD51 ssDNA along a donor dsDNA thereby changing the homology search from the diffusion-based mechanism to a motor-guided mechanism. Plays also an essential role in RAD51-mediated synaptic complex formation which consists of three strands encased in a protein filament formed once homology is recognized. Once DNA strand exchange occured, dissociates RAD51 from nucleoprotein filaments formed on dsDNA. The chain is DNA repair and recombination protein RAD54-like (RAD54L) from Gallus gallus (Chicken).